A 403-amino-acid polypeptide reads, in one-letter code: Signal-transducing adaptor protein 2 (403 aa).

The PH domain occupies 18-130 (PSHYYESFLE…VPTDLTLLPG (113 aa)). Phosphotyrosine; by SRC is present on Tyr22. Positions 133–248 (YMMSEVLAKE…KALVPFLLDE (116 aa)) constitute an SH2 domain. Tyr250 carries the phosphotyrosine; by PTK6 modification. The interval 270-308 (APSAPGPGPAPCTGGPKPLSPASSQDKLPPLPPLPNQEE) is disordered. Residue Tyr310 is modified to Phosphotyrosine. A Phosphotyrosine; by SRC modification is found at Tyr322. Residues 331–374 (SWPVILKPKKLPKPPAKLPKPPVGPKPEPKVFNGGLGRKLPVSS) are disordered. The segment covering 343-356 (KPPAKLPKPPVGPK) has biased composition (pro residues). Residues 382-402 (AGLADMTAELQKKLEKRRALE) adopt a coiled-coil conformation.

Interacts with PTK6 and CSF1R. Post-translationally, phosphorylated on tyrosine. Tyr-250 may be important for interaction with kinases. Phosphorylated by PTK6 at Tyr-250 modulates PTK6-mediated STAT3 activation. Tyr-22 and Tyr-322 appears to be phosphorylated by SRC. Widely expressed.

It localises to the cytoplasm. In terms of biological role, substrate of protein kinase PTK6. May play a regulatory role in the acute-phase response in systemic inflammation and may modulate STAT3 activity. The protein is Signal-transducing adaptor protein 2 (STAP2) of Homo sapiens (Human).